Consider the following 103-residue polypeptide: N(4)-acetylcytidine amidohydrolase (103 aa).

Residues 6-101 form the ASCH domain; that stretch reads ITFFQRFQDD…QTQFYVIEFK (96 aa). Lys21 serves as the catalytic Proton acceptor. Thr24 functions as the Nucleophile in the catalytic mechanism. Glu74 acts as the Proton donor in catalysis.

The protein belongs to the N(4)-acetylcytidine amidohydrolase family.

The catalysed reaction is N(4)-acetylcytidine + H2O = cytidine + acetate + H(+). The enzyme catalyses N(4)-acetyl-2'-deoxycytidine + H2O = 2'-deoxycytidine + acetate + H(+). It catalyses the reaction N(4)-acetylcytosine + H2O = cytosine + acetate + H(+). Functionally, catalyzes the hydrolysis of N(4)-acetylcytidine (ac4C). The protein is N(4)-acetylcytidine amidohydrolase (yqfB) of Escherichia fergusonii (strain ATCC 35469 / DSM 13698 / CCUG 18766 / IAM 14443 / JCM 21226 / LMG 7866 / NBRC 102419 / NCTC 12128 / CDC 0568-73).